Consider the following 290-residue polypeptide: PIH1 domain-containing protein 1 (290 aa).

A phosphoserine mark is found at serine 12, serine 16, and serine 173.

The protein belongs to the PIH1 family. In terms of assembly, component of the R2TP complex composed at least of RUVBL1, RUVBL2, RPAP3 and PIHD1. Component of the PAQosome complex which is responsible for the biogenesis of several protein complexes and which consists of R2TP complex members RUVBL1, RUVBL2, RPAP3 and PIH1D1, URI complex members PFDN2, PFDN6, PDRG1, UXT and URI1 as well as ASDURF, POLR2E and DNAAF10/WDR92. Interacts with phosphorylated TELO2 and mediates interaction of TELO2 with the R2TP complex. Interacts with phosphorylated ECD, EFTUD2/SNRP116, RPB1 and UBR5 and with RPB1 in a phosphorylation-independent manner. Interacts with the core C/D box snoRNP particle components NOP58 and FBL and with RUVBL1/TIP49. Interacts with RPAP3 and DNAAF10. Interacts with histone H4 and with SWI/SNF complex member SMARCB1/SNF5. Interacts with the mTORC1 complex member RPTOR. Interacts with MSL1.

The protein localises to the nucleus. Its function is as follows. Involved in the assembly of C/D box small nucleolar ribonucleoprotein (snoRNP) particles. Recruits the SWI/SNF complex to the core promoter of rRNA genes and enhances pre-rRNA transcription. Mediates interaction of TELO2 with the R2TP complex which is necessary for the stability of MTOR and SMG1. Positively regulates the assembly and activity of the mTORC1 complex. This chain is PIH1 domain-containing protein 1 (Pih1d1), found in Rattus norvegicus (Rat).